We begin with the raw amino-acid sequence, 505 residues long: Histidine ammonia-lyase (505 aa).

The segment at residues Ala-141 to Gly-143 is a cross-link (5-imidazolinone (Ala-Gly)). Ser-142 bears the 2,3-didehydroalanine (Ser) mark.

The protein belongs to the PAL/histidase family. Contains an active site 4-methylidene-imidazol-5-one (MIO), which is formed autocatalytically by cyclization and dehydration of residues Ala-Ser-Gly.

Its subcellular location is the cytoplasm. It catalyses the reaction L-histidine = trans-urocanate + NH4(+). It participates in amino-acid degradation; L-histidine degradation into L-glutamate; N-formimidoyl-L-glutamate from L-histidine: step 1/3. The sequence is that of Histidine ammonia-lyase from Bacillus mycoides (strain KBAB4) (Bacillus weihenstephanensis).